Consider the following 36-residue polypeptide: MENSNLFSFFVPLVGLVFSAIIMVLSFLYIQKDSVN.

Residues 10–30 form a helical membrane-spanning segment; the sequence is FVPLVGLVFSAIIMVLSFLYI.

It belongs to the PsaI family.

It localises to the plastid. It is found in the chloroplast thylakoid membrane. May help in the organization of the PsaL subunit. The sequence is that of Photosystem I reaction center subunit VIII from Welwitschia mirabilis (Tree tumbo).